The sequence spans 418 residues: Actin-related protein 3 (418 aa).

M1 bears the N-acetylmethionine mark.

This sequence belongs to the actin family. ARP3 subfamily. Component of the Arp2/3 complex composed of arpB/Arp2, arpC/Arp3, arcA/p41-arc, arcB/p34-arc, arcC/p21-arc, arcD/p20-arc and arcE/p16-arc. Interacts with carmil (via the region between the LRR domain and COOH-terminal proline-rich domain); carmil is required for Arp2/3-dependent actin nucleation. Arp2/3 complex, MyoB, MyoC, and the alpha and beta subunits of capping protein all form a larger complex with carmil.

Its subcellular location is the cytoplasm. It is found in the cytoskeleton. It localises to the cytosol. The protein localises to the cell cortex. The protein resides in the cell projection. Its subcellular location is the pseudopodium. Functions as ATP-binding component of the Arp2/3 complex which is involved in regulation of actin polymerization and together with an activating nucleation-promoting factor (NPF) mediates the formation of branched actin networks. Seems to contact the pointed end of the daughter actin filament. The Arp2/3 complex is involved in organizing the actin system in cell motility and chemotaxis, in phagocytosis and macropinocytosis, at late steps of endosome processing, and in mitosis. In concert with a group of other proteins, the Arp2/3 complex plays a general role in the rapid activation and adaptation of the actin system to its multiple functions. The polypeptide is Actin-related protein 3 (arpC) (Dictyostelium discoideum (Social amoeba)).